Here is a 356-residue protein sequence, read N- to C-terminus: Thrombomodulin (356 aa).

The Extracellular portion of the chain corresponds to 1–296 (RGARGETEGR…SPAPAGPLHS (296 aa)). EGF-like domains follow at residues 17–57 (GAWA…RSCG) and 60–98 (AEHPCHQLCEHFCHLHGLGNYTCICEAGYQLAADQHRCE). Intrachain disulfides connect cysteine 21–cysteine 32, cysteine 28–cysteine 41, cysteine 43–cysteine 56, cysteine 64–cysteine 72, cysteine 68–cysteine 82, cysteine 84–cysteine 97, cysteine 103–cysteine 114, cysteine 110–cysteine 123, cysteine 125–cysteine 136, cysteine 143–cysteine 152, cysteine 148–cysteine 162, cysteine 164–cysteine 178, cysteine 182–cysteine 191, cysteine 187–cysteine 199, cysteine 201–cysteine 213, cysteine 219–cysteine 228, cysteine 224–cysteine 237, and cysteine 239–cysteine 253. One can recognise an EGF-like 3; calcium-binding domain in the interval 99-137 (DVDDCAQLPSPCPQRCVNTEGGFQCHCDTGYELVDGECV). EGF-like domains lie at 139 to 179 (PVDP…HKCQ) and 178 to 214 (CQMFCNQTSCPADCDPHYPTICRCPEGYIIDEGSTCT). The EGF-like 6; calcium-binding domain maps to 215-254 (DINECDTNICPGQCHNLPGTYECICGPDSALSGQIGIDCD). Positions 255-290 (PTQVNEERGTPEDYGGSGEPPVSPTPGATARPSPAP) are disordered. Residue serine 271 is glycosylated (O-linked (Xyl...) (chondroitin sulfate) serine). A helical transmembrane segment spans residues 297-320 (GVLVGISIASLSLVVALLALLCHL). Residues 321 to 356 (RKKQGASRGELEYKCGVPAKELMLQQVKTERTPQKL) are Cytoplasmic-facing.

In terms of assembly, interacts with ITGAL, ITGAM and ITGB2. Interacts with thrombin/F2; this interaction switches the specificity of thrombin from a procoagulant to an anticoagulant and antifibrinolytic protease. Interacts with ANGP1 and ANGP2; these interactions significantly inhibit the generation of activated PC and TAFIa/CPB2 by the thrombin/thrombomodulin complex. Interacts with PF4; this interaction enhances generation of activated protein C. Interacts with HMGB1; this interaction inhibits HMGB1 inflammatory activity. As to expression, endothelial cells are unique in synthesizing thrombomodulin.

The protein localises to the membrane. Its function is as follows. Endothelial cell receptor that plays a critical role in regulating several physiological processes including hemostasis, coagulation, fibrinolysis, inflammation, and angiogenesis. Acts as a cofactor for thrombin activation of protein C/PROC on the surface of vascular endothelial cells leading to initiation of the activated protein C anticoagulant pathway. Also accelerates the activation of the plasma carboxypeptidase B2/CPB2, which catalyzes removal of C-terminal basic amino acids from its substrates including kinins or anaphylatoxins leading to fibrinolysis inhibition. Plays critical protective roles in changing the cleavage specificity of protease-activated receptor 1/PAR1, inhibiting endothelial cell permeability and inflammation. Suppresses inflammation distinctly from its anticoagulant cofactor activity by sequestering HMGB1 thereby preventing it from engaging cellular receptors such as RAGE and contributing to the inflammatory response. In Bos taurus (Bovine), this protein is Thrombomodulin (THBD).